We begin with the raw amino-acid sequence, 865 residues long: Envelope glycoprotein B (865 aa).

The N-terminal stretch at 1-21 (MHYFRRNCIFFLIVILYGTNS) is a signal peptide. Residues 22 to 731 (SPSTQNVTSR…SGVSAFMSNP (710 aa)) lie on the Virion surface side of the membrane. N-linked (GlcNAc...) asparagine; by host glycosylation is present at Asn-27. 5 cysteine pairs are disulfide-bonded: Cys-49–Cys-530, Cys-66–Cys-486, Cys-140–Cys-204, Cys-298–Cys-346, and Cys-553–Cys-590. Positions 106–112 (TWTGTTY) are involved in fusion and/or binding to host membrane. The N-linked (GlcNAc...) asparagine; by host glycan is linked to Asn-184. Positions 191-198 (GSPWIYRT) are involved in fusion and/or binding to host membrane. N-linked (GlcNAc...) asparagine; by host glycosylation is found at Asn-332, Asn-364, Asn-406, and Asn-425. The N-linked (GlcNAc...) asparagine; by host glycan is linked to Asn-631. Hydrophobic membrane proximal region stretches follow at residues 676-729 (INKV…AFMS) and 683-729 (DTNY…AFMS). The helical transmembrane segment at 732 to 752 (FGALAIGLIIIAGLVAAFLAY) threads the bilayer. The Intravirion portion of the chain corresponds to 753 to 865 (RYVNKLKSNP…TYSDSEDDAV (113 aa)). A Golgi targeting motif is present at residues 809–812 (YMAL). Residues 843–865 (IKNSNPKYDKLPTTYSDSEDDAV) are disordered. The Internalization motif motif lies at 850–853 (YDKL).

This sequence belongs to the herpesviridae glycoprotein B family. As to quaternary structure, homotrimer; disulfide-linked. Binds to heparan sulfate proteoglycans. Interacts with gH/gL heterodimer. In terms of processing, a proteolytic cleavage by host furin generates two subunits that remain linked by disulfide bonds.

Its subcellular location is the virion membrane. It is found in the host cell membrane. It localises to the host endosome membrane. The protein resides in the host Golgi apparatus membrane. Its function is as follows. Envelope glycoprotein that forms spikes at the surface of virion envelope. Essential for the initial attachment to heparan sulfate moieties of the host cell surface proteoglycans. Involved in fusion of viral and cellular membranes leading to virus entry into the host cell. Following initial binding to its host receptors, membrane fusion is mediated by the fusion machinery composed at least of gB and the heterodimer gH/gL. May be involved in the fusion between the virion envelope and the outer nuclear membrane during virion egress. The sequence is that of Envelope glycoprotein B from Gallid herpesvirus 2 (strain Chicken/Md5/ATCC VR-987) (GaHV-2).